A 310-amino-acid chain; its full sequence is p-hydroxybenzoic acid efflux pump subunit AaeA (310 aa).

A helical transmembrane segment spans residues 12–32 (AITLVLVILAFIAIFRAWVYY).

Belongs to the membrane fusion protein (MFP) (TC 8.A.1) family.

The protein resides in the cell inner membrane. In terms of biological role, forms an efflux pump with AaeB. This is p-hydroxybenzoic acid efflux pump subunit AaeA from Salmonella schwarzengrund (strain CVM19633).